The primary structure comprises 226 residues: Large ribosomal subunit protein uL1 (226 aa).

It belongs to the universal ribosomal protein uL1 family. As to quaternary structure, part of the 50S ribosomal subunit.

Its function is as follows. Binds directly to 23S rRNA. The L1 stalk is quite mobile in the ribosome, and is involved in E site tRNA release. In terms of biological role, protein L1 is also a translational repressor protein, it controls the translation of the L11 operon by binding to its mRNA. In Selenomonas ruminantium, this protein is Large ribosomal subunit protein uL1.